The sequence spans 350 residues: 3-dehydroquinate synthase (350 aa).

NAD(+) is bound by residues 106 to 110, 130 to 131, Lys143, and Lys152; these read GVVGD and TS. 3 residues coordinate Zn(2+): Glu185, His246, and His263.

This sequence belongs to the sugar phosphate cyclases superfamily. Dehydroquinate synthase family. It depends on NAD(+) as a cofactor. Co(2+) is required as a cofactor. The cofactor is Zn(2+).

Its subcellular location is the cytoplasm. The catalysed reaction is 7-phospho-2-dehydro-3-deoxy-D-arabino-heptonate = 3-dehydroquinate + phosphate. It functions in the pathway metabolic intermediate biosynthesis; chorismate biosynthesis; chorismate from D-erythrose 4-phosphate and phosphoenolpyruvate: step 2/7. Functionally, catalyzes the conversion of 3-deoxy-D-arabino-heptulosonate 7-phosphate (DAHP) to dehydroquinate (DHQ). The polypeptide is 3-dehydroquinate synthase (Clostridium perfringens (strain 13 / Type A)).